The primary structure comprises 947 residues: MNWNKGGSGNKRGFGFGGFAISTGKKEEPKLPQVSHSAFQSASSKYGSTSNQLPSFYKIGSKRANFDEENSYFDDEEEDSSNVDLPYIPAENSPTRQQLRSKTDSDSEEDPLEAFMAEVEDQAAKDMRKLEERDKEKANARGIRDDIEEEDDQEAYFRYMAENPTAGLVPEEEEDNLEYDSDGNPIAPTTKRIIDPLPPIDHTEIEYPPFEKNFYEEHEAITSQTPQQITELRHKLNLRVSGAAPPRLCSSFAHFGFDEQLLHQIRKSEYTQPTPIQCQGIPVALSGRDMIGIAKTGSGKTAAFIWPILVHIMDQKELQPADGPIAVIVCPTRELCQQIHSECKRFGKAYNLRSVAVYGGGSMWEQAKALQEGAEIVVCTPGRLIDHVKKKATNLQRVTYLVFDEADRMFDMGFEYQVRSIANHVRPDRQTLLFSATFRKKIEKLARDILVDPIRVVQGDIGEANEDITQVVEILPSGPEKWTWLTRRLVEFTSTGSVLVFVTKKANAEELAANLRQDDHPLGLLHGDMDQSERNKVISDFKKKSIPVLVATDVAARGLDIPSIKTVVNYDVARDIDTHTHRIGRTGRAGEKGVAYTLLTSKESNFAGDLVRNLEGANQYVSKELLDLAMQNSWFRKSRFKAGKGKKLNIGGGGLGYRERPGLGAESSEHGTGGNVMSNYEAFKPSGGAMGDRLSAMKSAFQSQYKNHFVAASASTQKTGTSSINSGAWTSAGSLSSVPSAHPPSGKLPAEAAPPPVHTAMLGFTSSGTLSSIPTGYPANISSASYPAATLFGARDGASAGTESGGRERHSDSKGRHGDSHRPSDREGYRHGDGHRHSSSSRHGERNGGEGRRESSRDGRRDSSRDGESRRDGSRDGGEGRRESSRDGEGRRESSRDGDGRRESSGDGRREVVGDDGDSRKEGTREAKTDTFAIPVPPKRKKSRWDS.

Residues 1–18 (MNWNKGGSGNKRGFGFGG) show a composition bias toward gly residues. 3 disordered regions span residues 1–54 (MNWN…NQLP), 68–114 (EENS…PLEA), and 176–200 (NLEY…LPPI). Polar residues predominate over residues 34-54 (VSHSAFQSASSKYGSTSNQLP). Over residues 68–81 (EENSYFDDEEEDSS) the composition is skewed to acidic residues. A coiled-coil region spans residues 112 to 152 (LEAFMAEVEDQAAKDMRKLEERDKEKANARGIRDDIEEEDD). Positions 250 to 278 (SSFAHFGFDEQLLHQIRKSEYTQPTPIQC) match the Q motif motif. In terms of domain architecture, Helicase ATP-binding spans 281–456 (IPVALSGRDM…RDILVDPIRV (176 aa)). 294–301 (AKTGSGKT) contributes to the ATP binding site. A DEAD box motif is present at residues 404-407 (DEAD). In terms of domain architecture, Helicase C-terminal spans 484-629 (WLTRRLVEFT…YVSKELLDLA (146 aa)). 2 disordered regions span residues 731–754 (SAGS…EAAP) and 797–947 (GASA…RWDS). Residues 805–929 (GGRERHSDSK…RKEGTREAKT (125 aa)) show a composition bias toward basic and acidic residues. Residues 938–947 (PKRKKSRWDS) show a composition bias toward basic residues.

The protein belongs to the DEAD box helicase family. DDX42 subfamily. Transient component of the SF3B subcomplex of the 17S U2 SnRNP complex.

Its subcellular location is the cytoplasm. It is found in the nucleus. The catalysed reaction is ATP + H2O = ADP + phosphate + H(+). Its function is as follows. ATP-dependent RNA helicase that binds to partially double-stranded RNAs (dsRNAs) in order to unwind RNA secondary structures. Unwinding is promoted in the presence of single-strand binding proteins. Also mediates RNA duplex formation thereby displacing the single-strand RNA binding protein. ATP and ADP modulate its activity: ATP binding and hydrolysis by DDX42 triggers RNA strand separation, whereas the ADP-bound form of the protein triggers annealing of complementary RNA strands. Required for assembly of the 17S U2 SnRNP complex of the spliceosome, a large ribonucleoprotein complex that removes introns from transcribed pre-mRNAs: DDX42 associates transiently with the SF3B subcomplex of the 17S U2 SnRNP complex and is released after fulfilling its role in the assembly of 17S U2 SnRNP. The polypeptide is ATP-dependent RNA helicase DDX42 (ddx42) (Xenopus laevis (African clawed frog)).